The chain runs to 233 residues: Sugar fermentation stimulation protein homolog (233 aa).

Belongs to the SfsA family.

The chain is Sugar fermentation stimulation protein homolog from Pyrobaculum neutrophilum (strain DSM 2338 / JCM 9278 / NBRC 100436 / V24Sta) (Thermoproteus neutrophilus).